The primary structure comprises 476 residues: tRNA(Ile)-lysidine synthase (476 aa).

25 to 30 (SGGPDS) contributes to the ATP binding site.

Belongs to the tRNA(Ile)-lysidine synthase family.

It localises to the cytoplasm. The enzyme catalyses cytidine(34) in tRNA(Ile2) + L-lysine + ATP = lysidine(34) in tRNA(Ile2) + AMP + diphosphate + H(+). In terms of biological role, ligates lysine onto the cytidine present at position 34 of the AUA codon-specific tRNA(Ile) that contains the anticodon CAU, in an ATP-dependent manner. Cytidine is converted to lysidine, thus changing the amino acid specificity of the tRNA from methionine to isoleucine. This is tRNA(Ile)-lysidine synthase from Bacillus licheniformis (strain ATCC 14580 / DSM 13 / JCM 2505 / CCUG 7422 / NBRC 12200 / NCIMB 9375 / NCTC 10341 / NRRL NRS-1264 / Gibson 46).